The sequence spans 108 residues: ATP-dependent Clp protease adapter protein ClpS (108 aa).

The protein belongs to the ClpS family. Binds to the N-terminal domain of the chaperone ClpA.

Involved in the modulation of the specificity of the ClpAP-mediated ATP-dependent protein degradation. This chain is ATP-dependent Clp protease adapter protein ClpS, found in Ralstonia pickettii (strain 12J).